Here is a 186-residue protein sequence, read N- to C-terminus: Inner membrane-spanning protein YciB (186 aa).

The next 5 membrane-spanning stretches (helical) occupy residues 10-30 (IILF…AVAI), 47-67 (VEPL…ATLL), 76-96 (WKPT…QLMF), 121-141 (WGWT…AYHF), and 149-169 (FKLF…ALYL).

It belongs to the YciB family.

The protein localises to the cell inner membrane. Plays a role in cell envelope biogenesis, maintenance of cell envelope integrity and membrane homeostasis. The chain is Inner membrane-spanning protein YciB from Acidovorax ebreus (strain TPSY) (Diaphorobacter sp. (strain TPSY)).